Consider the following 863-residue polypeptide: Neuroligin-1 (863 aa).

The signal sequence occupies residues 1-45; sequence MALPRCTWPNYVWRAVMACLVHRGLGAPLTLCMLGCLLQAGHVLS. At 46-717 the chain is on the extracellular side; it reads QKLDDVDPLV…DQRDYSTELS (672 aa). A glycan (N-linked (GlcNAc...) (complex) asparagine) is linked at Asn109. Cysteines 117 and 153 form a disulfide. The tract at residues 183-212 is disordered; that stretch reads KGGPLTKKQTDDLGDNDGAEDEDIRDSGGP. A compositionally biased stretch (acidic residues) spans 194-206; sequence DLGDNDGAEDEDI. Residues Asn323 and Asn363 are each glycosylated (N-linked (GlcNAc...) (complex) asparagine). Intrachain disulfides connect Cys362–Cys373 and Cys532–Cys566. N-linked (GlcNAc...) asparagine glycosylation is present at Asn567. Positions 670 to 708 are disordered; that stretch reads PSTDITFRPTRKNSVPVTSAFPTAKQDDPKQQPSPFSVD. The segment covering 681–690 has biased composition (polar residues); that stretch reads KNSVPVTSAF. Residues Ser703 and Ser706 are each glycosylated (O-linked (GalNAc...) serine). A helical membrane pass occupies residues 718 to 738; that stretch reads VTIAVGASLLFLNILAFAALY. Residues 739–863 are Cytoplasmic-facing; sequence YKKDKRRHDV…HPHSHSTTRV (125 aa). The segment at 842–863 is disordered; that stretch reads GGQNNTLPHPHPHPHSHSTTRV. The segment covering 851 to 863 has biased composition (basic residues); the sequence is PHPHPHSHSTTRV.

The protein belongs to the type-B carboxylesterase/lipase family. Interacts with neurexins NRXN1, NRXN2 and NRXN3. Interaction with neurexins is mediated by heparan sulfate glycan modification on neurexin. Interacts with NLGN3. Interacts with AIP1 and PDZRN3. Interacts (via its C-terminus) with DLG4/PSD-95 (via PDZ domain 3). Interacts with GOPC. In terms of tissue distribution, expressed in the blood vessel walls (at protein level). Highly expressed in brain through prenatal stages, and at lower levels in pancreas islet beta cells.

It is found in the cell membrane. It localises to the postsynaptic density. The protein resides in the synaptic cleft. Its subcellular location is the synaptic cell membrane. Functionally, cell surface protein involved in cell-cell-interactions via its interactions with neurexin family members. Plays a role in synapse function and synaptic signal transmission, and probably mediates its effects by recruiting and clustering other synaptic proteins. May promote the initial formation of synapses, but is not essential for this. In vitro, triggers the de novo formation of presynaptic structures. May be involved in specification of excitatory synapses. Required to maintain wakefulness quality and normal synchrony of cerebral cortex activity during wakefulness and sleep. The protein is involved in nervous system development. The protein is Neuroligin-1 (NLGN1) of Homo sapiens (Human).